We begin with the raw amino-acid sequence, 734 residues long: Cleavage stimulation factor subunit 77 (734 aa).

HAT repeat units follow at residues 20–52 (SPIA…AQMA), 54–85 (NNDD…FIRK), 93–128 (EGQE…FLKS), 139–172 (HRKT…FENT), 198–237 (ERKK…FEKG), 246–278 (SSTK…WHVK), 280–312 (GSTD…MEES), 314–345 (GAIQ…FLRR), 347–379 (EGVE…MAFC), 382–414 (KEPK…FLTR), 416–450 (NDDR…FEQT), and 474–505 (EGSS…DLDH). Residues 637–734 (VKQSFAAKGN…FSGELSGSTG (98 aa)) form a disordered region. A compositionally biased stretch (basic and acidic residues) spans 664–677 (LPRDRRATKRKDSD). The span at 709–734 (ATSSQTPTGSTSYGSAFSGELSGSTG) shows a compositional bias: polar residues.

In terms of assembly, homodimer. Belongs to the CSTF complex. Forms a complex with cleavage and polyadenylation specificity factor (CPSF) subunits CPSF30, CSTF64, PCFS1, PCFS5 and FIPS5.

It localises to the nucleus. One of the multiple factors required for polyadenylation and 3'-end cleavage of pre-mRNAs. Required for the targeted 3' processing of antisense transcripts that triggers transcriptional silencing of the corresponding sense gene. This is Cleavage stimulation factor subunit 77 from Arabidopsis thaliana (Mouse-ear cress).